The sequence spans 387 residues: Erythronate-4-phosphate dehydrogenase (387 aa).

2 residues coordinate substrate: S45 and T67. D147 contributes to the NAD(+) binding site. R208 is a catalytic residue. D232 is a binding site for NAD(+). The active site involves E237. The active-site Proton donor is H254. Residue G257 participates in NAD(+) binding. Residue Y258 coordinates substrate.

This sequence belongs to the D-isomer specific 2-hydroxyacid dehydrogenase family. PdxB subfamily. In terms of assembly, homodimer.

It is found in the cytoplasm. The catalysed reaction is 4-phospho-D-erythronate + NAD(+) = (R)-3-hydroxy-2-oxo-4-phosphooxybutanoate + NADH + H(+). It participates in cofactor biosynthesis; pyridoxine 5'-phosphate biosynthesis; pyridoxine 5'-phosphate from D-erythrose 4-phosphate: step 2/5. Its function is as follows. Catalyzes the oxidation of erythronate-4-phosphate to 3-hydroxy-2-oxo-4-phosphonooxybutanoate. This chain is Erythronate-4-phosphate dehydrogenase, found in Shewanella violacea (strain JCM 10179 / CIP 106290 / LMG 19151 / DSS12).